Here is a 242-residue protein sequence, read N- to C-terminus: Ribosomal RNA small subunit methyltransferase G (242 aa).

Residues Gly78, Phe83, 129–130, and Arg148 each bind S-adenosyl-L-methionine; that span reads AE.

This sequence belongs to the methyltransferase superfamily. RNA methyltransferase RsmG family.

The protein resides in the cytoplasm. Its function is as follows. Specifically methylates the N7 position of a guanine in 16S rRNA. This chain is Ribosomal RNA small subunit methyltransferase G, found in Lachnoclostridium phytofermentans (strain ATCC 700394 / DSM 18823 / ISDg) (Clostridium phytofermentans).